The primary structure comprises 147 residues: Large ribosomal subunit protein bL9 (147 aa).

The protein belongs to the bacterial ribosomal protein bL9 family.

Its function is as follows. Binds to the 23S rRNA. The sequence is that of Large ribosomal subunit protein bL9 from Helicobacter hepaticus (strain ATCC 51449 / 3B1).